We begin with the raw amino-acid sequence, 130 residues long: Fluoride-specific ion channel FluC (130 aa).

Helical transmembrane passes span 2–22 (GLLL…RFAL), 36–56 (GILL…AFLI), 71–91 (FLLV…SLDI), and 100–120 (IFIA…AVIL). The Na(+) site is built by G79 and T82.

Belongs to the fluoride channel Fluc/FEX (TC 1.A.43) family.

The protein localises to the cell inner membrane. The catalysed reaction is fluoride(in) = fluoride(out). Its activity is regulated as follows. Na(+) is not transported, but it plays an essential structural role and its presence is essential for fluoride channel function. Its function is as follows. Fluoride-specific ion channel. Important for reducing fluoride concentration in the cell, thus reducing its toxicity. The chain is Fluoride-specific ion channel FluC from Francisella tularensis subsp. tularensis (strain FSC 198).